A 128-amino-acid polypeptide reads, in one-letter code: Fluoride-specific ion channel FluC (128 aa).

Transmembrane regions (helical) follow at residues 4 to 24, 37 to 57, 65 to 85, and 101 to 121; these read VMGIIAVALGGAVGSLARYAI, FGTFIANLAGCLFIGLLWSFF, TFRLFLFTGLLGGLTTFSTFS, and FGYLFLSISLGLAMVAVGFFI. Na(+) is bound by residues G76 and T79.

The protein belongs to the fluoride channel Fluc/FEX (TC 1.A.43) family.

The protein localises to the cell inner membrane. It catalyses the reaction fluoride(in) = fluoride(out). With respect to regulation, na(+) is not transported, but it plays an essential structural role and its presence is essential for fluoride channel function. Its function is as follows. Fluoride-specific ion channel. Important for reducing fluoride concentration in the cell, thus reducing its toxicity. This is Fluoride-specific ion channel FluC from Desulfotalea psychrophila (strain LSv54 / DSM 12343).